Here is a 234-residue protein sequence, read N- to C-terminus: Cyclo(L-leucyl-L-leucyl) synthase (234 aa).

Ser28 acts as the Nucleophile in catalysis. Substrate contacts are provided by residues 171–175, Tyr195, and 200–201; these read YVLAE and EL.

This sequence belongs to the CDPS family.

It catalyses the reaction 2 L-leucyl-tRNA(Leu) = cyclo(L-leucyl-L-leucyl) + 2 tRNA(Leu) + 2 H(+). Its function is as follows. It uses activated amino acids in the form of aminoacyl-tRNAs (aa-tRNAs) as substrates to catalyze the ATP-independent formation of cyclodipeptides which are intermediates in diketopiperazine (DKP) biosynthetic pathways. Catalyzes the formation of cyclo(L-Leu-L-Leu) (cLL) from L-leucyl-tRNA(Leu). Can incorporate various nonpolar residues, such as L-phenylalanine, L-leucine and L-methionine, into cyclodipeptides. The chain is Cyclo(L-leucyl-L-leucyl) synthase from Staphylococcus haemolyticus (strain JCSC1435).